The primary structure comprises 328 residues: Gonadotropin-releasing hormone receptor (328 aa).

The Extracellular portion of the chain corresponds to 1 to 38 (MANSDSPEQNENHCSSINSSIPLTPGSLPTLTLSGKIR). N-linked (GlcNAc...) asparagine glycosylation is present at Asn-18. A helical transmembrane segment spans residues 39-58 (VTVTFFLFLLSTIFNTSFLL). At 59–77 (KLQNWTQRKEKRKKLSRMK) the chain is on the cytoplasmic side. A helical membrane pass occupies residues 78-97 (LLLKHLTLANLLETLIVMPL). Topologically, residues 98–115 (DGMWNITVQWYAGELLCK) are extracellular. Residue Asn-102 is glycosylated (N-linked (GlcNAc...) asparagine). Cysteines 114 and 196 form a disulfide. Residues 116 to 137 (VLSYLKLFSMYAPAFMMVVISL) form a helical membrane-spanning segment. Over 138 to 164 (DRSLAITKPLAVKSNSKLGQFMIGLAW) the chain is Cytoplasmic. The helical transmembrane segment at 165-184 (LLSSIFAGPQLYIFGMIHLA) threads the bilayer. Residues 185–212 (DDSGQTEGFSQCVTHCSFPQWWHQAFYN) are Extracellular-facing. Residues 213–232 (FFTFSCLFIIPLLIMVICNA) traverse the membrane as a helical segment. Residues 233-281 (KIIFTLTRVLHQDPHKLQLNQSKNNIPRARLRTLKMTVAFATSFTVCWT) are Cytoplasmic-facing. A helical membrane pass occupies residues 282–300 (PYYVLGIWYWFDPDMVNRV). Residues 301–306 (SDPVNH) lie on the Extracellular side of the membrane. The chain crosses the membrane as a helical span at residues 307-326 (FFFLFAFLNPCFNPLIYGYF). At 327 to 328 (SL) the chain is on the cytoplasmic side.

It belongs to the G-protein coupled receptor 1 family.

Its subcellular location is the cell membrane. Receptor for gonadotropin releasing hormone (GnRH) that mediates the action of GnRH to stimulate the secretion of the gonadotropic hormones luteinizing hormone (LH) and follicle-stimulating hormone (FSH). This receptor mediates its action by association with G-proteins that activate a phosphatidylinositol-calcium second messenger system. The protein is Gonadotropin-releasing hormone receptor (GNRHR) of Bos mutus grunniens (Wild yak).